Consider the following 419-residue polypeptide: MSSPLKNALVTAMLAGGALSSPTKQHVGIPVNASPEVGPGKYSFKQVRNPNYKFNGPLSVKKTYLKYGVPIPAWLEDAVQNSTSGLAERSTGSATTTPIDSLDDAYITPVQIGTPAQTLNLDFDTGSSDLWVFSSETTASEVDGQTIYTPSKSTTAKLLSGATWSISYGDGSSSSGDVYTDTVSVGGLTVTGQAVESAKKVSSSFTEDSTIDGLLGLAFSTLNTVSPTQQKTFFDNAKASLDSPVFTADLGYHAPGTYNFGFIDTTAYTGSITYTAVSTKQGFWEWTSTGYAVGSGTFKSTSIDGIADTGTTLLYLPATVVSAYWAQVSGAKSSSSVGGYVFPCSATLPSFTFGVGSARIVIPGDYIDFGPISTGSSSCFGGIQSSAGIGINIFGDVALKAAFVVFNGATTPTLGFASK.

The signal sequence occupies residues 1 to 20 (MSSPLKNALVTAMLAGGALS). A propeptide spans 21–89 (SPTKQHVGIP…QNSTSGLAER (69 aa)) (activation peptide). The Peptidase A1 domain occupies 106 to 417 (YITPVQIGTP…GATTPTLGFA (312 aa)). Active-site residues include D124 and S288. A disulfide bridge links C344 with C379.

It belongs to the peptidase A1 family.

It catalyses the reaction Hydrolysis of proteins with specificity similar to that of pepsin A, prefers hydrophobic residues at P1 and P1', but does not cleave 14-Ala-|-Leu-15 in the B chain of insulin or Z-Glu-Tyr. Clots milk.. The chain is Endothiapepsin (EAPA) from Cryphonectria parasitica (Chestnut blight fungus).